A 588-amino-acid chain; its full sequence is Succinate dehydrogenase flavoprotein subunit (588 aa).

FAD-binding positions include 14–19 (GAGGAG), 37–52 (SKVF…AQGG), and Asp-221. Position 45 is a tele-8alpha-FAD histidine (His-45). Substrate-binding residues include His-242 and Thr-254. Position 267 is an N6-acetyllysine (Lys-267). Catalysis depends on Arg-286, which acts as the Proton acceptor. His-354 serves as a coordination point for substrate. Glu-388 lines the FAD pocket. Arg-399 contacts substrate. 404–405 (SL) is a binding site for FAD.

The protein belongs to the FAD-dependent oxidoreductase 2 family. FRD/SDH subfamily. In terms of assembly, part of an enzyme complex containing four subunits: a flavoprotein, an iron-sulfur, cytochrome b-556, and a hydrophobic anchor protein. The complex forms trimers. FAD serves as cofactor.

The protein resides in the cell inner membrane. The catalysed reaction is a quinone + succinate = fumarate + a quinol. Its pathway is carbohydrate metabolism; tricarboxylic acid cycle; fumarate from succinate (bacterial route): step 1/1. In terms of biological role, two distinct, membrane-bound, FAD-containing enzymes are responsible for the catalysis of fumarate and succinate interconversion; the fumarate reductase is used in anaerobic growth, and the succinate dehydrogenase is used in aerobic growth. The sequence is that of Succinate dehydrogenase flavoprotein subunit (sdhA) from Escherichia coli O157:H7.